Consider the following 1389-residue polypeptide: DNA-directed RNA polymerase subunit beta'' (1389 aa).

Zn(2+)-binding residues include Cys220, Cys290, Cys297, and Cys300.

This sequence belongs to the RNA polymerase beta' chain family. RpoC2 subfamily. In plastids the minimal PEP RNA polymerase catalytic core is composed of four subunits: alpha, beta, beta', and beta''. When a (nuclear-encoded) sigma factor is associated with the core the holoenzyme is formed, which can initiate transcription. Zn(2+) is required as a cofactor.

The protein resides in the plastid. It localises to the chloroplast. The catalysed reaction is RNA(n) + a ribonucleoside 5'-triphosphate = RNA(n+1) + diphosphate. In terms of biological role, DNA-dependent RNA polymerase catalyzes the transcription of DNA into RNA using the four ribonucleoside triphosphates as substrates. This is DNA-directed RNA polymerase subunit beta'' from Chloranthus spicatus (Chulantree).